The following is a 165-amino-acid chain: Large ribosomal subunit protein uL11 (165 aa).

A Phosphoserine modification is found at Ser-38. Lys-40 participates in a covalent cross-link: Glycyl lysine isopeptide (Lys-Gly) (interchain with G-Cter in SUMO2). Lys-48 participates in a covalent cross-link: Glycyl lysine isopeptide (Lys-Gly) (interchain with G-Cter in ubiquitin). Lys-54 carries the post-translational modification N6-acetyllysine. Residue Lys-83 forms a Glycyl lysine isopeptide (Lys-Gly) (interchain with G-Cter in ubiquitin) linkage. At Ser-165 the chain carries Phosphoserine.

Belongs to the universal ribosomal protein uL11 family. In terms of assembly, component of the large ribosomal subunit. Mature ribosomes consist of a small (40S) and a large (60S) subunit. The 40S subunit contains about 33 different proteins and 1 molecule of RNA (18S). The 60S subunit contains about 49 different proteins and 3 molecules of RNA (28S, 5.8S and 5S). In terms of processing, ubiquitinated at Lys-48 and Lys-83 by RNF14 and RNF25 in response to ribosome collisions (ribosome stalling).

The protein resides in the cytoplasm. In terms of biological role, component of the large ribosomal subunit. The ribosome is a large ribonucleoprotein complex responsible for the synthesis of proteins in the cell. Binds directly to 26S ribosomal RNA. This Mus musculus (Mouse) protein is Large ribosomal subunit protein uL11 (Rpl12).